We begin with the raw amino-acid sequence, 365 residues long: Homeobox protein Nkx-6.1 (365 aa).

Residues 35 to 136 form a disordered region; it reads LYPAAYPPLP…SSSSASATSA (102 aa). 3 stretches are compositionally biased toward low complexity: residues 48–59, 69–92, and 110–136; these read PSSSSSSSSSSS, PGGLKPPAAGGLSSLGSPPQQLSA, and ASGAALPSASPSGSSSSSSSSASATSA. Positions 102–269 are repressor domain; that stretch reads LSRPSMPVAS…KYLAGPERAR (168 aa). Arg-190 is subject to Asymmetric dimethylarginine. Residues 237–296 constitute a DNA-binding region (homeobox); sequence RKHTRPTFSGQQIFALEKTFEQTKYLAGPERARLAYSLGMTESQVKVWFQNRRTKWRKKH. Residues 295–365 form a disordered region; it reads KHAAEMATAK…LHASEAEGSS (71 aa). The segment covering 305–318 has biased composition (basic and acidic residues); that stretch reads KKQDSETERLKGTS. Residues 307-365 form an involved in DNA-binding region; it reads QDSETERLKGTSENEEDDDDYNKPLDPNSDDEKITQLLKKHKSSGGSLLLHASEAEGSS.

As to expression, pancreatic beta cells.

It is found in the nucleus. In terms of biological role, transcription factor which binds to specific A/T-rich DNA sequences in the promoter regions of a number of genes. Involved in the development of insulin-producing beta cells in the islets of Langerhans at the secondary transition. Together with NKX2-2 and IRX3 acts to restrict the generation of motor neurons to the appropriate region of the neural tube. Belongs to the class II proteins of neuronal progenitor factors, which are induced by SHH signals. In Rattus norvegicus (Rat), this protein is Homeobox protein Nkx-6.1 (Nkx6-1).